Reading from the N-terminus, the 394-residue chain is S-adenosylmethionine synthase 1 (394 aa).

Position 11 (Glu-11) interacts with Mg(2+). ATP is bound at residue His-17. K(+) is bound at residue Glu-45. Residues Glu-58 and Gln-101 each contribute to the L-methionine site. ATP is bound by residues 169-171, 237-240, Asp-248, 254-255, Ala-271, Lys-275, and Lys-279; these read DGK, SGRF, and RK. Position 248 (Asp-248) interacts with L-methionine. Lys-279 is an L-methionine binding site.

Belongs to the AdoMet synthase family. In terms of assembly, homotetramer. Mn(2+) serves as cofactor. Mg(2+) is required as a cofactor. Requires Co(2+) as cofactor. It depends on K(+) as a cofactor.

Its subcellular location is the cytoplasm. The enzyme catalyses L-methionine + ATP + H2O = S-adenosyl-L-methionine + phosphate + diphosphate. It participates in amino-acid biosynthesis; S-adenosyl-L-methionine biosynthesis; S-adenosyl-L-methionine from L-methionine: step 1/1. Its function is as follows. Catalyzes the formation of S-adenosylmethionine from methionine and ATP. The reaction comprises two steps that are both catalyzed by the same enzyme: formation of S-adenosylmethionine (AdoMet) and triphosphate, and subsequent hydrolysis of the triphosphate. In Triticum monococcum (Einkorn wheat), this protein is S-adenosylmethionine synthase 1 (SAMS1).